The following is a 957-amino-acid chain: Glycine dehydrogenase (decarboxylating) (957 aa).

Lysine 708 carries the N6-(pyridoxal phosphate)lysine modification.

Belongs to the GcvP family. As to quaternary structure, the glycine cleavage system is composed of four proteins: P, T, L and H. The cofactor is pyridoxal 5'-phosphate.

The enzyme catalyses N(6)-[(R)-lipoyl]-L-lysyl-[glycine-cleavage complex H protein] + glycine + H(+) = N(6)-[(R)-S(8)-aminomethyldihydrolipoyl]-L-lysyl-[glycine-cleavage complex H protein] + CO2. Its function is as follows. The glycine cleavage system catalyzes the degradation of glycine. The P protein binds the alpha-amino group of glycine through its pyridoxal phosphate cofactor; CO(2) is released and the remaining methylamine moiety is then transferred to the lipoamide cofactor of the H protein. The sequence is that of Glycine dehydrogenase (decarboxylating) from Salmonella heidelberg (strain SL476).